A 332-amino-acid polypeptide reads, in one-letter code: Fructose-1,6-bisphosphatase class 1 (332 aa).

Residues Glu93, Asp113, Leu115, and Asp116 each contribute to the Mg(2+) site. Substrate-binding positions include Asp116–Ser119, Asn209, Tyr235, and Lys272. Glu278 lines the Mg(2+) pocket.

This sequence belongs to the FBPase class 1 family. Homotetramer. The cofactor is Mg(2+).

It localises to the cytoplasm. It carries out the reaction beta-D-fructose 1,6-bisphosphate + H2O = beta-D-fructose 6-phosphate + phosphate. Its pathway is carbohydrate biosynthesis; gluconeogenesis. The polypeptide is Fructose-1,6-bisphosphatase class 1 (Syntrophus aciditrophicus (strain SB)).